The sequence spans 525 residues: Histidine-rich glycoprotein (525 aa).

The first 18 residues, Met-1–Ala-18, serve as a signal peptide directing secretion. Cystatin domains lie at Val-19 to Ala-136 and Asn-137 to Gly-254. Disulfide bonds link Cys-24-Cys-504, Cys-78-Cys-89, Cys-105-Cys-126, Cys-203-Cys-417, and Cys-218-Cys-241. Residues Arg-41 to Lys-84 are interaction with ATP5F1A. An N-linked (GlcNAc...) asparagine glycan is attached at Asn-63. N-linked (GlcNAc...) asparagine glycosylation is present at Asn-125. A disordered region spans residues Ile-252 to His-407. The span at Arg-284–His-293 shows a compositional bias: basic residues. Pro residues predominate over residues Pro-310 to Leu-320. Polar residues predominate over residues Ser-323 to Asp-348. Residues Asn-344 and Asn-345 are each glycosylated (N-linked (GlcNAc...) asparagine). The segment at Asp-348–His-382 is necessary for endothelial cell focal adhesions and anti-angiogenic activities. Composition is skewed to basic residues over residues Pro-351–Pro-371 and Gln-379–His-407.

In terms of assembly, interacts (via the HRR domain) with TPM1; the interaction appears to contribute to the antiangiogenic properties of the HRR domain. Interacts with THBS2; the interaction blocks the antiangiogenic effect of THBS2 with CD36. Interacts with THBS1 (via the TSP type I repeats); the interaction blocks the antiangiogenic effect of THBS1 with CD3. Interacts with PLG (via its Kringle domains); the interaction tethers PLG to the cell surface and enhances its activation. Interacts with HPSE; the interaction is enhanced at acidic pH, partially inhibits binding of HPSE to cell surface receptors and modulates its enzymatic activity. Interacts (via the HRR domain) with TMP1; the interaction partially mediates the antiangiogenic properties of HRG. Interacts with kappa and lambda light chains of IgG molecules. Interacts with ATP5F1A; the interaction occurs on the surface of T-cells and alters their cell morphology in concert with CONA. Binds IgG molecules containing kappa and lambda light chains and inhibits the formation of insoluble immunoglobulin complexes. Interacts with F12; the interaction, which is enhanced in the presence of zinc ions and inhibited by heparin-binding to HRG, inhibits factor XII autoactivation and contact-initiated coagulation. Zn(2+) serves as cofactor. Post-translationally, proteolytic cleavage produces several HRG fragments which are mostly disulfide-linked and, therefore, not released. Cleavage by plasmin is inhibited in the presence of heparin, zinc ions or in an acidic environment. Cleavage reduces binding of HRG to heparan sulfate, but enhances the ability of HRG to bind and tether plasminogen to the cell surface. On platelet activation, releases a 33 kDa antiangiogenic peptide which encompasses the HRR. Also cleaved in the C-terminal by plasmin. In terms of processing, N-glycosylated. In terms of tissue distribution, expressed in macrophages and in malignant cells. Expressed by the liver and secreted in plasma (at protein level).

It localises to the secreted. In terms of biological role, plasma glycoprotein that binds a number of ligands such as heme, heparin, heparan sulfate, thrombospondin, plasminogen, and divalent metal ions. Binds heparin and heparin/glycosaminoglycans in a zinc-dependent manner. Binds heparan sulfate on the surface of liver, lung, kidney and heart endothelial cells. Binds to N-sulfated polysaccharide chains on the surface of liver endothelial cells. Inhibits rosette formation. Acts as an adapter protein and is implicated in regulating many processes such as immune complex and pathogen clearance, cell chemotaxis, cell adhesion, angiogenesis, coagulation and fibrinolysis. Mediates clearance of necrotic cells through enhancing the phagocytosis of necrotic cells in a heparan sulfate-dependent pathway. This process can be regulated by the presence of certain HRG ligands such as heparin and zinc ions. Binds to IgG subclasses of immunoglobins containing kappa and lambda light chains with different affinities regulating their clearance and inhibiting the formation of insoluble immune complexes. Tethers plasminogen to the cell surface. Binds T-cells and alters the cell morphology. Modulates angiogenesis by blocking the CD6-mediated antiangiongenic effect of thrombospondins, THBS1 and THBS2. Acts as a regulator of the vascular endothelial growth factor (VEGF) signaling pathway; inhibits endothelial cell motility by reducing VEGF-induced complex formation between PXN/paxillin and ILK/integrin-linked protein kinase and by promoting inhibition of VEGF-induced tyrosine phosphorylation of focal adhesion kinases and alpha-actinins in endothelial cells. Also plays a role in the regulation of tumor angiogenesis and tumor immune surveillance. Normalizes tumor vessels and promotes antitumor immunity by polarizing tumor-associated macrophages, leading to decreased tumor growth and metastasis. The chain is Histidine-rich glycoprotein (HRG) from Homo sapiens (Human).